A 275-amino-acid chain; its full sequence is Ribosomal RNA small subunit methyltransferase A (275 aa).

Asn-28, Leu-30, Gly-55, Glu-77, Asp-103, and Asn-123 together coordinate S-adenosyl-L-methionine.

The protein belongs to the class I-like SAM-binding methyltransferase superfamily. rRNA adenine N(6)-methyltransferase family. RsmA subfamily.

It is found in the cytoplasm. The enzyme catalyses adenosine(1518)/adenosine(1519) in 16S rRNA + 4 S-adenosyl-L-methionine = N(6)-dimethyladenosine(1518)/N(6)-dimethyladenosine(1519) in 16S rRNA + 4 S-adenosyl-L-homocysteine + 4 H(+). Specifically dimethylates two adjacent adenosines (A1518 and A1519) in the loop of a conserved hairpin near the 3'-end of 16S rRNA in the 30S particle. May play a critical role in biogenesis of 30S subunits. The chain is Ribosomal RNA small subunit methyltransferase A from Rhizobium etli (strain CIAT 652).